Consider the following 96-residue polypeptide: uncharacterized protein (96 aa).

The tract at residues Ser35–Lys96 is disordered. Residues Gly38–Lys52 show a composition bias toward basic and acidic residues. A compositionally biased stretch (polar residues) spans Ala69–Leu80.

This is an uncharacterized protein from Dictyostelium discoideum (Social amoeba).